The sequence spans 404 residues: Cysteine desulfurase IscS (404 aa).

Residues 75 to 76 (AT), N155, Q183, and 203 to 205 (SGH) each bind pyridoxal 5'-phosphate. K206 bears the N6-(pyridoxal phosphate)lysine mark. T243 is a binding site for pyridoxal 5'-phosphate. C328 serves as the catalytic Cysteine persulfide intermediate. C328 serves as a coordination point for [2Fe-2S] cluster.

The protein belongs to the class-V pyridoxal-phosphate-dependent aminotransferase family. NifS/IscS subfamily. In terms of assembly, homodimer. Forms a heterotetramer with IscU, interacts with other sulfur acceptors. Pyridoxal 5'-phosphate is required as a cofactor.

The protein localises to the cytoplasm. It carries out the reaction (sulfur carrier)-H + L-cysteine = (sulfur carrier)-SH + L-alanine. It participates in cofactor biosynthesis; iron-sulfur cluster biosynthesis. Master enzyme that delivers sulfur to a number of partners involved in Fe-S cluster assembly, tRNA modification or cofactor biosynthesis. Catalyzes the removal of elemental sulfur atoms from cysteine to produce alanine. Functions as a sulfur delivery protein for Fe-S cluster synthesis onto IscU, an Fe-S scaffold assembly protein, as well as other S acceptor proteins. This is Cysteine desulfurase IscS from Shewanella halifaxensis (strain HAW-EB4).